The primary structure comprises 206 residues: Large ribosomal subunit protein uL4 (206 aa).

Positions 46–78 are disordered; sequence GNRAQKDREQVKHTTKKPWRQKGTGRARAGMSS. Positions 58-70 are enriched in basic residues; that stretch reads HTTKKPWRQKGTG.

Belongs to the universal ribosomal protein uL4 family. As to quaternary structure, part of the 50S ribosomal subunit.

Its function is as follows. One of the primary rRNA binding proteins, this protein initially binds near the 5'-end of the 23S rRNA. It is important during the early stages of 50S assembly. It makes multiple contacts with different domains of the 23S rRNA in the assembled 50S subunit and ribosome. Forms part of the polypeptide exit tunnel. The protein is Large ribosomal subunit protein uL4 of Burkholderia lata (strain ATCC 17760 / DSM 23089 / LMG 22485 / NCIMB 9086 / R18194 / 383).